A 348-amino-acid polypeptide reads, in one-letter code: Glucokinase (348 aa).

14 to 19 (GDVGGS) provides a ligand contact to ATP. The segment at 327 to 348 (SDPAPVAAPTHPRGGTAGDMHA) is disordered.

The protein belongs to the bacterial glucokinase family.

The protein localises to the cytoplasm. It catalyses the reaction D-glucose + ATP = D-glucose 6-phosphate + ADP + H(+). This Chromobacterium violaceum (strain ATCC 12472 / DSM 30191 / JCM 1249 / CCUG 213 / NBRC 12614 / NCIMB 9131 / NCTC 9757 / MK) protein is Glucokinase.